The following is a 471-amino-acid chain: Elongation factor 1-alpha (471 aa).

One can recognise a tr-type G domain in the interval 10–239 (KPRLNACFIG…EALNYQDVPE (230 aa)). Residues 19–26 (GHVDSGKS) are G1. Residue 19-26 (GHVDSGKS) participates in GTP binding. The interval 75–79 (GITIT) is G2. Positions 96 to 99 (DCPG) are G3. GTP is bound by residues 96–100 (DCPGH) and 156–159 (NKMD). Residues 156 to 159 (NKMD) form a G4 region. Residues 196–198 (SAF) are G5.

It belongs to the TRAFAC class translation factor GTPase superfamily. Classic translation factor GTPase family. EF-Tu/EF-1A subfamily. As to quaternary structure, component of the eukaryotic elongation factor 1 complex (eEF1).

The protein resides in the cytoplasm. It participates in protein biosynthesis; polypeptide chain elongation. Functionally, GTP-binding component of the eukaryotic elongation factor 1 complex (eEF1). In its active GTP-bound form, binds to and delivers aminoacyl-tRNA to the A-site of ribosomes during protein biosynthesis. In the presence of a correct codon-anticodon match between the aminoacyl-tRNA and the A-site codon of the ribosome-bound mRNA, the ribosome acts as a GTPase activator and the GTP is hydrolyzed. The inactive GDP-bound form leaves the ribosome and must be recycled by its guanine nucleotide exchange factor (GEF) (eEF1B subcomplex) before binding another molecule of aminoacyl-tRNA. Required for nuclear export of aminoacyl-tRNAs. May also be involved in translational quality control by targeting cotranslationally damaged proteins to the proteasome. The polypeptide is Elongation factor 1-alpha (TEF1) (Encephalitozoon cuniculi (strain GB-M1) (Microsporidian parasite)).